The sequence spans 255 residues: Coiled-coil domain-containing 92B (255 aa).

The stretch at 28 to 90 forms a coiled coil; the sequence is LRDLHLEILR…AAANAELRRE (63 aa). Positions 149–255 are disordered; sequence QRLQAPRPGP…SQPSAPGDPE (107 aa). Residues 166 to 177 are compositionally biased toward basic residues; the sequence is PRRRALRARRPP. The span at 242-255 shows a compositional bias: pro residues; the sequence is QPAPSQPSAPGDPE.

The polypeptide is Coiled-coil domain-containing 92B (Homo sapiens (Human)).